Consider the following 254-residue polypeptide: Large ribosomal subunit protein uL4 (254 aa).

Belongs to the universal ribosomal protein uL4 family. Part of the 50S ribosomal subunit.

Functionally, one of the primary rRNA binding proteins, this protein initially binds near the 5'-end of the 23S rRNA. It is important during the early stages of 50S assembly. It makes multiple contacts with different domains of the 23S rRNA in the assembled 50S subunit and ribosome. Forms part of the polypeptide exit tunnel. The protein is Large ribosomal subunit protein uL4 of Methanothermobacter thermautotrophicus (strain ATCC 29096 / DSM 1053 / JCM 10044 / NBRC 100330 / Delta H) (Methanobacterium thermoautotrophicum).